The chain runs to 194 residues: Peptidyl-tRNA hydrolase (194 aa).

Residue Tyr-17 coordinates tRNA. His-22 acts as the Proton acceptor in catalysis. Tyr-68, Asn-70, and Asn-115 together coordinate tRNA.

It belongs to the PTH family. In terms of assembly, monomer.

It localises to the cytoplasm. It carries out the reaction an N-acyl-L-alpha-aminoacyl-tRNA + H2O = an N-acyl-L-amino acid + a tRNA + H(+). Functionally, hydrolyzes ribosome-free peptidyl-tRNAs (with 1 or more amino acids incorporated), which drop off the ribosome during protein synthesis, or as a result of ribosome stalling. Its function is as follows. Catalyzes the release of premature peptidyl moieties from peptidyl-tRNA molecules trapped in stalled 50S ribosomal subunits, and thus maintains levels of free tRNAs and 50S ribosomes. The chain is Peptidyl-tRNA hydrolase from Pseudoalteromonas atlantica (strain T6c / ATCC BAA-1087).